Here is a 361-residue protein sequence, read N- to C-terminus: Single-stranded DNA-binding protein 3 (361 aa).

Residue Met-1 is modified to N-acetylmethionine. Positions 16–48 (AREKLALYVYEYLLHVGAQKSAQTFLSEIRWEK) constitute a LisH domain. Asymmetric dimethylarginine occurs at positions 128, 134, and 138. Disordered stretches follow at residues 140-166 (GNQP…QQGH) and 184-361 (PMGP…TMSV). Residues 223–241 (PNSANSIPYSSSSPGTYVG) are compositionally biased toward low complexity. Positions 245–255 (GGGPPGTPIMP) are enriched in pro residues. The segment covering 258-269 (ADSTNSSDNIYT) has biased composition (polar residues). The span at 288–298 (GSDGPMGGMGG) shows a compositional bias: gly residues. Over residues 319-330 (NSPNNISGISNP) the composition is skewed to low complexity. Phosphoserine is present on residues Ser-320, Ser-325, and Ser-328. Thr-333 carries the phosphothreonine modification. A compositionally biased stretch (polar residues) spans 346–361 (HSFQNDNYSPSMTMSV). Ser-354 and Ser-360 each carry phosphoserine.

The protein localises to the nucleus. Its function is as follows. May be involved in transcription regulation of the alpha 2(I) collagen gene where it binds to the single-stranded polypyrimidine sequences in the promoter region. This is Single-stranded DNA-binding protein 3 (Ssbp3) from Rattus norvegicus (Rat).